The following is an 89-amino-acid chain: Large ribosomal subunit protein bL27 (89 aa).

A disordered region spans residues 1-26 (MAHKKGVGSSRNGRDSESKRLGVKEG). Residues 12–26 (NGRDSESKRLGVKEG) show a composition bias toward basic and acidic residues.

Belongs to the bacterial ribosomal protein bL27 family.

This Desulforamulus reducens (strain ATCC BAA-1160 / DSM 100696 / MI-1) (Desulfotomaculum reducens) protein is Large ribosomal subunit protein bL27.